Here is a 329-residue protein sequence, read N- to C-terminus: MTTTTASLVKTFLFRCDSFSSFKFKCKFESPAKTRLLSPATEKHVVRSSRAWRIRCLSDDPGSSHVFVASRRKMVVLLSTVQLLSHMLPQNGNAAEIYPVMQNEIRKVVTKGKAAGVLRLVFHDAGTFELDDHSGGINGSIAYELERPENIGLKKSLKVLAKAKVKVDEIQPVSWADMISVAGSEAVSICGGPTIPVVLGRLDSAQPDPEGKLPPETLSASGLKECFKRKGFSTQELVALSGAHTIGSKGFGDPTVFDNAYYKILLEKPWTSTSKMTSMVGLPSDHALVQDDECLRWVKRYAEDQDKFFEDFTNAYIKLVNSGAKWNML.

The Proton acceptor role is filled by H123. Residue H244 coordinates heme b.

The protein belongs to the peroxidase family. Ascorbate peroxidase subfamily. It depends on heme b as a cofactor.

The catalysed reaction is L-ascorbate + H2O2 = L-dehydroascorbate + 2 H2O. Plays a key role in hydrogen peroxide removal. The polypeptide is Putative L-ascorbate peroxidase 6 (APX6) (Arabidopsis thaliana (Mouse-ear cress)).